Consider the following 198-residue polypeptide: Imidazoleglycerol-phosphate dehydratase (198 aa).

This sequence belongs to the imidazoleglycerol-phosphate dehydratase family.

The protein resides in the cytoplasm. The enzyme catalyses D-erythro-1-(imidazol-4-yl)glycerol 3-phosphate = 3-(imidazol-4-yl)-2-oxopropyl phosphate + H2O. It functions in the pathway amino-acid biosynthesis; L-histidine biosynthesis; L-histidine from 5-phospho-alpha-D-ribose 1-diphosphate: step 6/9. This is Imidazoleglycerol-phosphate dehydratase from Magnetococcus marinus (strain ATCC BAA-1437 / JCM 17883 / MC-1).